The chain runs to 346 residues: Dihydroorotase (346 aa).

Residues H14 and H16 each coordinate Zn(2+). Substrate-binding positions include 16–18 (HLR) and N42. Zn(2+) contacts are provided by K100, H137, and H175. Residue K100 is modified to N6-carboxylysine. H137 provides a ligand contact to substrate. Substrate is bound at residue L220. Position 248 (D248) interacts with Zn(2+). The active site involves D248. Residues H252 and A264 each coordinate substrate.

Belongs to the metallo-dependent hydrolases superfamily. DHOase family. Class II DHOase subfamily. Homodimer. Zn(2+) is required as a cofactor.

The enzyme catalyses (S)-dihydroorotate + H2O = N-carbamoyl-L-aspartate + H(+). The protein operates within pyrimidine metabolism; UMP biosynthesis via de novo pathway; (S)-dihydroorotate from bicarbonate: step 3/3. Catalyzes the reversible cyclization of carbamoyl aspartate to dihydroorotate. In Ruegeria pomeroyi (strain ATCC 700808 / DSM 15171 / DSS-3) (Silicibacter pomeroyi), this protein is Dihydroorotase.